A 329-amino-acid chain; its full sequence is Lipoyl synthase (329 aa).

Residues cysteine 55, cysteine 60, cysteine 66, cysteine 81, cysteine 85, cysteine 88, and serine 292 each contribute to the [4Fe-4S] cluster site. The Radical SAM core domain maps to tryptophan 67–leucine 281.

Belongs to the radical SAM superfamily. Lipoyl synthase family. It depends on [4Fe-4S] cluster as a cofactor.

The protein resides in the cytoplasm. The enzyme catalyses [[Fe-S] cluster scaffold protein carrying a second [4Fe-4S](2+) cluster] + N(6)-octanoyl-L-lysyl-[protein] + 2 oxidized [2Fe-2S]-[ferredoxin] + 2 S-adenosyl-L-methionine + 4 H(+) = [[Fe-S] cluster scaffold protein] + N(6)-[(R)-dihydrolipoyl]-L-lysyl-[protein] + 4 Fe(3+) + 2 hydrogen sulfide + 2 5'-deoxyadenosine + 2 L-methionine + 2 reduced [2Fe-2S]-[ferredoxin]. It functions in the pathway protein modification; protein lipoylation via endogenous pathway; protein N(6)-(lipoyl)lysine from octanoyl-[acyl-carrier-protein]: step 2/2. Catalyzes the radical-mediated insertion of two sulfur atoms into the C-6 and C-8 positions of the octanoyl moiety bound to the lipoyl domains of lipoate-dependent enzymes, thereby converting the octanoylated domains into lipoylated derivatives. This is Lipoyl synthase from Leifsonia xyli subsp. xyli (strain CTCB07).